The primary structure comprises 119 residues: Acidic phospholipase A2 E (119 aa).

7 disulfide bridges follow: C11/C71, C26/C118, C28/C44, C43/C99, C50/C92, C60/C85, and C78/C90. 3 residues coordinate Ca(2+): Y27, G29, and G31. H47 is a catalytic residue. D48 is a binding site for Ca(2+). D93 is an active-site residue.

The protein belongs to the phospholipase A2 family. Group I subfamily. D49 sub-subfamily. The cofactor is Ca(2+). In terms of tissue distribution, expressed by the venom gland.

Its subcellular location is the secreted. It catalyses the reaction a 1,2-diacyl-sn-glycero-3-phosphocholine + H2O = a 1-acyl-sn-glycero-3-phosphocholine + a fatty acid + H(+). PLA2 catalyzes the calcium-dependent hydrolysis of the 2-acyl groups in 3-sn-phosphoglycerides. The chain is Acidic phospholipase A2 E from Naja oxiana (Central Asian cobra).